A 360-amino-acid chain; its full sequence is Protein phosphatase methylesterase 1 (360 aa).

The segment at 26-50 is disordered; it reads DEDDIPEPAVMPPTGNSSSTANTED. Active-site residues include Ser-167, Asp-192, and His-316.

The protein belongs to the AB hydrolase superfamily.

It carries out the reaction [phosphatase 2A protein]-C-terminal L-leucine methyl ester + H2O = [phosphatase 2A protein]-C-terminal L-leucine + methanol + H(+). In terms of biological role, demethylates proteins that have been reversibly carboxymethylated. Demethylates the phosphatase PP2A catalytic subunit. Involved in the regulation of filamentous growth. The polypeptide is Protein phosphatase methylesterase 1 (PPE1) (Candida albicans (strain SC5314 / ATCC MYA-2876) (Yeast)).